Reading from the N-terminus, the 423-residue chain is MFAGSVIRKLSHSEEVFARYEVFTSMTIQLRGVLDIDALSEAFDALVQAHPVLASHLETSSDGGWNLVADDLLHPGICVVDANNGAQSGCGGIQSETRLDQSVSLLNLRLTPREGGGELVLYIHHSMADGHHGAVLVDELFSRYTDVVTTGDPGPIIPQATPLSMEAVLQQRGVKKHALSGAERFMSVMYAYDLPATGTPAVLAEPGLPQAVPVTRLWLTKQETSDLAAFGREHRLSINAVVAAAILMTEWRLRETPHVPIPYVYPVDLRYVLAPPVAPTESTNLLGAAGYLAEIGQDTDIVDLATDIVATLRADLANGVVQQSGLHFGTAFEGTPPGLPPLVFCTDATAFPTMRTPPDLAIEDIQGRFYCSISVPLDLYSCGVYEGQLIIEHHGHIEEPAKALEAIRSLLCTVPSEYGWIME.

The Proton acceptor role is filled by H125.

Belongs to the acyltransferase PapA5 family. Monomer. Interacts directly with the acyl carrier protein (ACP) domain of the mycocerosic acid synthase (mas) protein.

The enzyme catalyses 2 a mycocerosyl-[mycocerosic acid synthase] + a phthiocerol = a dimycocerosyl phthiocerol + 2 holo-[mycocerosic acid synthase].. It catalyses the reaction 2 a mycocerosyl-[mycocerosic acid synthase] + a phthiodiolone = a dimycocerosyl phthiodiolone + 2 holo-[mycocerosic acid synthase].. It carries out the reaction 2 a mycocerosyl-[mycocerosic acid synthase] + a phenolphthiocerol = a dimycocerosyl phenolphthiocerol + 2 holo-[mycocerosic acid synthase].. Catalyzes diesterification of phthiocerol, phthiodiolone, and phenolphthiocerol with mycocerosic acids, the final step in the phthiocerol, phthiodiolone and phenolphthiocerol dimycocerosate esters (PDIM) synthesis. Can directly transfer the mycocerosate bound to the mycocerosic acid synthase (mas) onto the substrate alcohols. This is Phthiocerol/phthiodiolone dimycocerosyl transferase (papA5) from Mycobacterium leprae (strain TN).